A 487-amino-acid polypeptide reads, in one-letter code: Glutamyl-tRNA(Gln) amidotransferase subunit A (487 aa).

Residues K75 and S150 each act as charge relay system in the active site. S174 acts as the Acyl-ester intermediate in catalysis.

It belongs to the amidase family. GatA subfamily. In terms of assembly, heterotrimer of A, B and C subunits.

The enzyme catalyses L-glutamyl-tRNA(Gln) + L-glutamine + ATP + H2O = L-glutaminyl-tRNA(Gln) + L-glutamate + ADP + phosphate + H(+). In terms of biological role, allows the formation of correctly charged Gln-tRNA(Gln) through the transamidation of misacylated Glu-tRNA(Gln) in organisms which lack glutaminyl-tRNA synthetase. The reaction takes place in the presence of glutamine and ATP through an activated gamma-phospho-Glu-tRNA(Gln). The chain is Glutamyl-tRNA(Gln) amidotransferase subunit A from Deinococcus deserti (strain DSM 17065 / CIP 109153 / LMG 22923 / VCD115).